We begin with the raw amino-acid sequence, 57 residues long: Large ribosomal subunit protein bL32 (57 aa).

The segment at 1–21 (MAVQQRRSSKHRRDKRRSHDA) is disordered. Positions 7 to 18 (RSSKHRRDKRRS) are enriched in basic residues.

This sequence belongs to the bacterial ribosomal protein bL32 family.

The chain is Large ribosomal subunit protein bL32 (rpmF) from Mycoplasma pneumoniae (strain ATCC 29342 / M129 / Subtype 1) (Mycoplasmoides pneumoniae).